A 95-amino-acid chain; its full sequence is Aspartyl/glutamyl-tRNA(Asn/Gln) amidotransferase subunit C (95 aa).

Belongs to the GatC family. Heterotrimer of A, B and C subunits.

It catalyses the reaction L-glutamyl-tRNA(Gln) + L-glutamine + ATP + H2O = L-glutaminyl-tRNA(Gln) + L-glutamate + ADP + phosphate + H(+). It carries out the reaction L-aspartyl-tRNA(Asn) + L-glutamine + ATP + H2O = L-asparaginyl-tRNA(Asn) + L-glutamate + ADP + phosphate + 2 H(+). Functionally, allows the formation of correctly charged Asn-tRNA(Asn) or Gln-tRNA(Gln) through the transamidation of misacylated Asp-tRNA(Asn) or Glu-tRNA(Gln) in organisms which lack either or both of asparaginyl-tRNA or glutaminyl-tRNA synthetases. The reaction takes place in the presence of glutamine and ATP through an activated phospho-Asp-tRNA(Asn) or phospho-Glu-tRNA(Gln). This Chlorobium phaeobacteroides (strain BS1) protein is Aspartyl/glutamyl-tRNA(Asn/Gln) amidotransferase subunit C.